We begin with the raw amino-acid sequence, 497 residues long: Glycerol kinase (497 aa).

An ADP-binding site is contributed by Thr-11. Thr-11, Ser-12, and Ser-13 together coordinate ATP. Thr-11 lines the sn-glycerol 3-phosphate pocket. Arg-15 lines the ADP pocket. 4 residues coordinate sn-glycerol 3-phosphate: Arg-81, Glu-82, Tyr-133, and Asp-242. Arg-81, Glu-82, Tyr-133, Asp-242, and Gln-243 together coordinate glycerol. ADP is bound by residues Thr-264 and Gly-307. Residues Thr-264, Gly-307, Gln-311, and Gly-412 each coordinate ATP. Gly-412 and Asn-416 together coordinate ADP.

It belongs to the FGGY kinase family.

The enzyme catalyses glycerol + ATP = sn-glycerol 3-phosphate + ADP + H(+). Its pathway is polyol metabolism; glycerol degradation via glycerol kinase pathway; sn-glycerol 3-phosphate from glycerol: step 1/1. Inhibited by fructose 1,6-bisphosphate (FBP). In terms of biological role, key enzyme in the regulation of glycerol uptake and metabolism. Catalyzes the phosphorylation of glycerol to yield sn-glycerol 3-phosphate. In Variovorax paradoxus (strain S110), this protein is Glycerol kinase.